Consider the following 425-residue polypeptide: Enolase (425 aa).

Gln-163 is a binding site for (2R)-2-phosphoglycerate. Glu-205 acts as the Proton donor in catalysis. Residues Asp-242, Glu-285, and Asp-312 each contribute to the Mg(2+) site. 4 residues coordinate (2R)-2-phosphoglycerate: Lys-337, Arg-366, Ser-367, and Lys-388. The Proton acceptor role is filled by Lys-337.

It belongs to the enolase family. Requires Mg(2+) as cofactor.

The protein resides in the cytoplasm. The protein localises to the secreted. Its subcellular location is the cell surface. The enzyme catalyses (2R)-2-phosphoglycerate = phosphoenolpyruvate + H2O. It participates in carbohydrate degradation; glycolysis; pyruvate from D-glyceraldehyde 3-phosphate: step 4/5. In terms of biological role, catalyzes the reversible conversion of 2-phosphoglycerate (2-PG) into phosphoenolpyruvate (PEP). It is essential for the degradation of carbohydrates via glycolysis. The polypeptide is Enolase (Acidiphilium cryptum (strain JF-5)).